A 95-amino-acid chain; its full sequence is Costars family protein WS02710_H03 (95 aa).

This sequence belongs to the costars family.

The sequence is that of Costars family protein WS02710_H03 from Picea sitchensis (Sitka spruce).